Reading from the N-terminus, the 438-residue chain is Serine hydroxymethyltransferase (438 aa).

133-135 (GHI) is a binding site for (6S)-5,6,7,8-tetrahydrofolate. Lys239 carries the N6-(pyridoxal phosphate)lysine modification.

The protein belongs to the SHMT family. As to quaternary structure, homodimer. Pyridoxal 5'-phosphate is required as a cofactor.

The protein resides in the cytoplasm. It catalyses the reaction 5,10-methylenetetrahydromethanopterin + glycine + H2O = 5,6,7,8-tetrahydromethanopterin + L-serine. It participates in amino-acid biosynthesis; glycine biosynthesis; glycine from L-serine: step 1/1. In terms of biological role, catalyzes the reversible interconversion of serine and glycine with tetrahydromethanopterin (H4MPT) serving as the one-carbon carrier. Also exhibits a pteridine-independent aldolase activity toward beta-hydroxyamino acids, producing glycine and aldehydes, via a retro-aldol mechanism. The sequence is that of Serine hydroxymethyltransferase from Archaeoglobus fulgidus (strain ATCC 49558 / DSM 4304 / JCM 9628 / NBRC 100126 / VC-16).